A 949-amino-acid chain; its full sequence is Serine/threonine-protein kinase KIPK2 (949 aa).

Disordered regions lie at residues 79–116, 323–344, 407–426, and 495–525; these read LETS…VGPS, TALS…TEKS, STST…DKNV, and SSEK…SNLS. Over residues 81-94 the composition is skewed to low complexity; sequence TSASAGTSRSTSPS. Polar residues-rich tracts occupy residues 407–420 and 495–512; these read STST…NTSH and SSEK…LGDY. Low complexity predominate over residues 513 to 525; sequence SSSTSMSEESNLS. Residues 559–898 enclose the Protein kinase domain; that stretch reads FNLLKKLGCG…AAEIKRHPFF (340 aa). ATP contacts are provided by residues 565 to 573 and Lys588; that span reads LGCGDIGTV. Asp684 acts as the Proton acceptor in catalysis.

Belongs to the protein kinase superfamily. Ser/Thr protein kinase family. Interacts with KCBP, PERK8, PERK9, PERK10 and PERK13.

The catalysed reaction is L-seryl-[protein] + ATP = O-phospho-L-seryl-[protein] + ADP + H(+). The enzyme catalyses L-threonyl-[protein] + ATP = O-phospho-L-threonyl-[protein] + ADP + H(+). Functionally, serine/threonine-protein kinase that could be involved in the negative regulation of root growth. This is Serine/threonine-protein kinase KIPK2 from Arabidopsis thaliana (Mouse-ear cress).